Here is a 185-residue protein sequence, read N- to C-terminus: Peptidyl-tRNA hydrolase (185 aa).

Residue tyrosine 14 coordinates tRNA. The active-site Proton acceptor is the histidine 19. Tyrosine 65, asparagine 67, and asparagine 113 together coordinate tRNA.

This sequence belongs to the PTH family. As to quaternary structure, monomer.

It is found in the cytoplasm. The catalysed reaction is an N-acyl-L-alpha-aminoacyl-tRNA + H2O = an N-acyl-L-amino acid + a tRNA + H(+). Its function is as follows. Hydrolyzes ribosome-free peptidyl-tRNAs (with 1 or more amino acids incorporated), which drop off the ribosome during protein synthesis, or as a result of ribosome stalling. Catalyzes the release of premature peptidyl moieties from peptidyl-tRNA molecules trapped in stalled 50S ribosomal subunits, and thus maintains levels of free tRNAs and 50S ribosomes. The sequence is that of Peptidyl-tRNA hydrolase from Rickettsia akari (strain Hartford).